Consider the following 293-residue polypeptide: N-acetylmannosamine kinase (293 aa).

ATP is bound by residues 5–12 (AIDIGGTK) and 133–140 (GVGGGLVI). The Zn(2+) site is built by histidine 157, cysteine 167, cysteine 169, and cysteine 174.

This sequence belongs to the ROK (NagC/XylR) family. NanK subfamily. In terms of assembly, homodimer.

The catalysed reaction is an N-acyl-D-mannosamine + ATP = an N-acyl-D-mannosamine 6-phosphate + ADP + H(+). It participates in amino-sugar metabolism; N-acetylneuraminate degradation; D-fructose 6-phosphate from N-acetylneuraminate: step 2/5. Its function is as follows. Catalyzes the phosphorylation of N-acetylmannosamine (ManNAc) to ManNAc-6-P. This chain is N-acetylmannosamine kinase, found in Vibrio vulnificus (strain CMCP6).